Reading from the N-terminus, the 621-residue chain is Phosphatidylinositol-3,5-bisphosphate 3-phosphatase MTMR6 (621 aa).

Residues 1–101 (MEHIRTTKVE…YNSLLQLSKQ (101 aa)) form the GRAM domain. The tract at residues 2–141 (EHIRTTKVEQ…EEYKRMGVPN (140 aa)) is interaction with RAB1B. Phosphotyrosine is present on Tyr-108. One can recognise a Myotubularin phosphatase domain in the interval 124 to 499 (GWQLIDLAEE…FNFKFWRNMY (376 aa)). Asn-248, Asn-273, and Ile-274 together coordinate a 1,2-diacyl-sn-glycero-3-phospho-(1D-myo-inositol-3,5-bisphosphate). A 1,2-diacyl-sn-glycero-3-phospho-(1D-myo-inositol-3-phosphate) is bound by residues Asn-248, Asn-273, and Ile-274. Catalysis depends on Cys-336, which acts as the Phosphocysteine intermediate. Residues Ser-337, Asp-338, Gly-339, Trp-340, Asp-341, Arg-342, Lys-378, and Arg-382 each contribute to the a 1,2-diacyl-sn-glycero-3-phospho-(1D-myo-inositol-3,5-bisphosphate) site. Positions 337, 338, 339, 340, 341, and 342 each coordinate a 1,2-diacyl-sn-glycero-3-phospho-(1D-myo-inositol-3-phosphate). Arg-382 serves as a coordination point for a 1,2-diacyl-sn-glycero-3-phospho-(1D-myo-inositol-3-phosphate). 4 positions are modified to phosphoserine: Ser-556, Ser-561, Ser-589, and Ser-611.

Belongs to the protein-tyrosine phosphatase family. Non-receptor class myotubularin subfamily. In terms of assembly, homodimer. Heterodimer (via C-terminus) with MTMR9 (via C-terminus). Interacts with ALKBH4. Interacts with KCNN4. Interacts (via GRAM domain) with RAB1B (in GDP-bound form); the interaction regulates MTMR6 recruitment to the endoplasmic reticulum-Golgi intermediate compartment. Expressed in CD4+ T-cells.

It is found in the cytoplasm. Its subcellular location is the endoplasmic reticulum-Golgi intermediate compartment. The protein resides in the endoplasmic reticulum. It localises to the cell projection. The protein localises to the ruffle membrane. It is found in the perinuclear region. It catalyses the reaction a 1,2-diacyl-sn-glycero-3-phospho-(1D-myo-inositol-3,5-bisphosphate) + H2O = a 1,2-diacyl-sn-glycero-3-phospho-(1D-myo-inositol-5-phosphate) + phosphate. The catalysed reaction is a 1,2-diacyl-sn-glycero-3-phospho-(1D-myo-inositol-3-phosphate) + H2O = a 1,2-diacyl-sn-glycero-3-phospho-(1D-myo-inositol) + phosphate. The enzyme catalyses 1,2-dioctanoyl-sn-glycero-3-phospho-(1D-myo-inositol-3,5-bisphosphate) + H2O = 1,2-dioctanoyl-sn-glycero-3-phospho-(1D-myo-inositol-5-phosphate) + phosphate. It carries out the reaction 1,2-dioctanoyl-sn-glycero-3-phospho-(1-D-myo-inositol-3-phosphate) + H2O = 1,2-dioctanoyl-sn-glycero-3-phospho-(1D-myo-inositol) + phosphate. Its activity is regulated as follows. Allosterically activated by phosphatidylserine and/or phosphatidylinositol 4-phosphate (PtdIns(4)P), and phosphatidylinositol 5-phosphate (PtdIns(5)P). Interaction with MTMR9 increases catalytic activity towards phosphatidylinositol 3,5-bisphosphate. Its function is as follows. Lipid phosphatase that specifically dephosphorylates the D-3 position of phosphatidylinositol 3-phosphate and phosphatidylinositol 3,5-bisphosphate, generating phosphatidylinositol and phosphatidylinositol 5-phosphate. Binds with high affinity to phosphatidylinositol 3,5-bisphosphate (PtdIns(3,5)P2) but also to phosphatidylinositol 3-phosphate (PtdIns(3)P), phosphatidylinositol 4-phosphate (PtdIns(4)P), and phosphatidylinositol 5-phosphate (PtdIns(5)P), phosphatidic acid and phosphatidylserine. Negatively regulates ER-Golgi protein transport. Probably in association with MTMR9, plays a role in the late stages of macropinocytosis by dephosphorylating phosphatidylinositol 3-phosphate in membrane ruffles. Acts as a negative regulator of KCNN4/KCa3.1 channel activity in CD4(+) T-cells possibly by decreasing intracellular levels of phosphatidylinositol 3-phosphate. Negatively regulates proliferation of reactivated CD4(+) T-cells. In complex with MTMR9, negatively regulates DNA damage-induced apoptosis. The formation of the MTMR6-MTMR9 complex stabilizes both MTMR6 and MTMR9 protein levels. This chain is Phosphatidylinositol-3,5-bisphosphate 3-phosphatase MTMR6, found in Homo sapiens (Human).